A 268-amino-acid chain; its full sequence is GTP cyclohydrolase 1 type 2 homolog (268 aa).

5 residues coordinate a divalent metal cation: H66, H67, D105, H227, and E231.

Belongs to the GTP cyclohydrolase I type 2/NIF3 family. In terms of assembly, homohexamer.

The chain is GTP cyclohydrolase 1 type 2 homolog from Clostridium acetobutylicum (strain ATCC 824 / DSM 792 / JCM 1419 / IAM 19013 / LMG 5710 / NBRC 13948 / NRRL B-527 / VKM B-1787 / 2291 / W).